Here is a 145-residue protein sequence, read N- to C-terminus: Arginine repressor (145 aa).

This sequence belongs to the ArgR family.

Its subcellular location is the cytoplasm. It participates in amino-acid biosynthesis; L-arginine biosynthesis [regulation]. Functionally, regulates arginine biosynthesis genes. In Streptococcus pyogenes serotype M3 (strain ATCC BAA-595 / MGAS315), this protein is Arginine repressor.